Here is a 590-residue protein sequence, read N- to C-terminus: Complement component C8 beta chain (590 aa).

The N-terminal stretch at 1–32 (MKKSWTWTWRVPAELLLLCAALGCLCVPGSRS) is a signal peptide. The propeptide occupies 33–54 (ERPRSLEPTVVNRSLAKSRHSR). A glycan (N-linked (GlcNAc...) asparagine) is linked at Asn-44. In terms of domain architecture, TSP type-1 1 spans 64–117 (DCELSSWSSWTMCDPCQKKRYRHAYLLRPSQFNGEPCNFSDKEVEDCATSRPCR). 7 disulfides stabilise this stretch: Cys-65–Cys-100, Cys-76–Cys-110, Cys-79–Cys-116, Cys-122–Cys-133, Cys-127–Cys-146, Cys-140–Cys-155, and Cys-162–Cys-200. C-linked (Man) tryptophan glycans are attached at residues Trp-70 and Trp-73. Asn-101 carries N-linked (GlcNAc...) asparagine glycosylation. The 38-residue stretch at 120-157 (VRCEGFVCAQTGRCVNRRLLCNGDNDCGDQSDEANCRK) folds into the LDL-receptor class A domain. Residues Leu-138, Asn-141, Asp-143, Asp-145, Asp-151, and Glu-152 each contribute to the Ca(2+) site. The MACPF domain maps to 158–504 (IYKKCHHEME…EFQGEVSPCR (347 aa)). The next 4 beta stranded transmembrane spans lie at 252-259 (STFNLGFK), 262-269 (SIFEFGIN), 379-386 (AKNDFKLG), and 392-399 (VYVSLGVS). A disulfide bridge connects residues Cys-378 and Cys-403. Position 418 is a phosphothreonine (Thr-418). 4 cysteine pairs are disulfide-bonded: Cys-503-Cys-550, Cys-505-Cys-521, Cys-508-Cys-523, and Cys-525-Cys-534. Positions 505 to 535 (CAPCQGNGVPVQKGSRCDCICPVGFQGSACE) constitute an EGF-like domain. In terms of domain architecture, TSP type-1 2 spans 545 to 588 (DGRWSCWSRWSSCSGGQKTRRRQCNNPAPQDGGSPCSGPASETL). C-linked (Man) tryptophan glycosylation is found at Trp-551 and Trp-554. A disulfide bridge links Cys-557 with Cys-590. Positions 557–590 (CSGGQKTRRRQCNNPAPQDGGSPCSGPASETLAC) are disordered.

The protein belongs to the complement C6/C7/C8/C9 family. In terms of assembly, heterotrimer of 3 chains: alpha (C8A), beta (C8B) and gamma (C8G); the alpha and gamma chains are disulfide bonded. Component of the membrane attack complex (MAC), composed of complement C5b, C6, C7, C8A, C8B, C8G and multiple copies of the pore-forming subunit C9. In terms of processing, N-glycosylated; contains one or two bound glycans. Not O-glycosylated.

It localises to the secreted. The protein resides in the target cell membrane. Its activity is regulated as follows. Membrane attack complex (MAC) assembly is inhibited by CD59, thereby protecting self-cells from damage during complement activation. CD59 acts by binding to the beta-haipins of C8 (C8A and C8B), forming an intermolecular beta-sheet that prevents incorporation of the multiple copies of C9 required for complete formation of the osmolytic pore. MAC assembly is also inhibited by clusterin (CLU) chaperones that inhibit polymerization of C9. In terms of biological role, component of the membrane attack complex (MAC), a multiprotein complex activated by the complement cascade, which inserts into a target cell membrane and forms a pore, leading to target cell membrane rupture and cell lysis. The MAC is initiated by proteolytic cleavage of C5 into complement C5b in response to the classical, alternative, lectin and GZMK complement pathways. The complement pathways consist in a cascade of proteins that leads to phagocytosis and breakdown of pathogens and signaling that strengthens the adaptive immune system. C8B, together with C8A and C8G, inserts into the target membrane, but does not form pores by itself. During MAC assembly, associates with C5b, C6 and C7 to form the C5b8 intermediate complex that inserts into the target membrane and traverses the bilayer increasing membrane rigidity. The polypeptide is Complement component C8 beta chain (C8B) (Oryctolagus cuniculus (Rabbit)).